The following is a 263-amino-acid chain: 3-methyl-2-oxobutanoate hydroxymethyltransferase (263 aa).

Residues D45 and D84 each coordinate Mg(2+). 3-methyl-2-oxobutanoate is bound by residues 45–46 (DS), D84, and K112. E114 is a binding site for Mg(2+). Residue E180 is the Proton acceptor of the active site.

It belongs to the PanB family. In terms of assembly, homodecamer; pentamer of dimers. Mg(2+) is required as a cofactor.

The protein localises to the cytoplasm. It carries out the reaction 3-methyl-2-oxobutanoate + (6R)-5,10-methylene-5,6,7,8-tetrahydrofolate + H2O = 2-dehydropantoate + (6S)-5,6,7,8-tetrahydrofolate. Its pathway is cofactor biosynthesis; (R)-pantothenate biosynthesis; (R)-pantoate from 3-methyl-2-oxobutanoate: step 1/2. Functionally, catalyzes the reversible reaction in which hydroxymethyl group from 5,10-methylenetetrahydrofolate is transferred onto alpha-ketoisovalerate to form ketopantoate. The polypeptide is 3-methyl-2-oxobutanoate hydroxymethyltransferase (Salmonella paratyphi C (strain RKS4594)).